A 558-amino-acid polypeptide reads, in one-letter code: CTP synthase (558 aa).

The amidoligase domain stretch occupies residues methionine 1–leucine 267. CTP is bound at residue serine 13. Serine 13 provides a ligand contact to UTP. ATP is bound by residues serine 14 to isoleucine 19 and aspartate 71. Mg(2+) is bound by residues aspartate 71 and glutamate 141. CTP is bound by residues aspartate 148–glutamate 150, lysine 188–glutamine 193, and lysine 224. UTP-binding positions include lysine 188 to glutamine 193 and lysine 224. Residues lysine 292–alanine 534 enclose the Glutamine amidotransferase type-1 domain. Glycine 354 provides a ligand contact to L-glutamine. Cysteine 381 functions as the Nucleophile; for glutamine hydrolysis in the catalytic mechanism. L-glutamine-binding positions include leucine 382–glutamine 385, glutamate 405, and arginine 462. Active-site residues include histidine 507 and glutamate 509. The disordered stretch occupies residues proline 536 to glycine 558. The span at arginine 542–glycine 558 shows a compositional bias: polar residues.

It belongs to the CTP synthase family. Homotetramer.

The enzyme catalyses UTP + L-glutamine + ATP + H2O = CTP + L-glutamate + ADP + phosphate + 2 H(+). The catalysed reaction is L-glutamine + H2O = L-glutamate + NH4(+). It carries out the reaction UTP + NH4(+) + ATP = CTP + ADP + phosphate + 2 H(+). It participates in pyrimidine metabolism; CTP biosynthesis via de novo pathway; CTP from UDP: step 2/2. Allosterically activated by GTP, when glutamine is the substrate; GTP has no effect on the reaction when ammonia is the substrate. The allosteric effector GTP functions by stabilizing the protein conformation that binds the tetrahedral intermediate(s) formed during glutamine hydrolysis. Inhibited by the product CTP, via allosteric rather than competitive inhibition. Functionally, catalyzes the ATP-dependent amination of UTP to CTP with either L-glutamine or ammonia as the source of nitrogen. Regulates intracellular CTP levels through interactions with the four ribonucleotide triphosphates. This chain is CTP synthase, found in Prochlorococcus marinus (strain MIT 9313).